The chain runs to 299 residues: Serine/threonine-protein kinase 1 (299 aa).

Residues I39–F277 form the Protein kinase domain. ATP-binding positions include F45–V53 and K66. The Proton acceptor role is filled by D153.

This sequence belongs to the protein kinase superfamily. Ser/Thr protein kinase family.

Its subcellular location is the virion. It is found in the host cytoplasm. It catalyses the reaction L-seryl-[protein] + ATP = O-phospho-L-seryl-[protein] + ADP + H(+). It carries out the reaction L-threonyl-[protein] + ATP = O-phospho-L-threonyl-[protein] + ADP + H(+). Essential for viral replication. It may mediate the virus progression through DNA replication. In African swine fever virus (isolate Tick/Malawi/Lil 20-1/1983) (ASFV), this protein is Serine/threonine-protein kinase 1.